The primary structure comprises 754 residues: 5-methyltetrahydropteroyltriglutamate--homocysteine methyltransferase (754 aa).

5-methyltetrahydropteroyltri-L-glutamate-binding positions include 19–22 (RELK) and Lys121. L-homocysteine contacts are provided by residues 423 to 425 (IGS) and Glu476. L-methionine-binding positions include 423–425 (IGS) and Glu476. Residues 507-508 (RC) and Trp553 each bind 5-methyltetrahydropteroyltri-L-glutamate. Position 591 (Asp591) interacts with L-homocysteine. Asp591 contacts L-methionine. Glu597 is a 5-methyltetrahydropteroyltri-L-glutamate binding site. Residues His633, Cys635, and Glu657 each contribute to the Zn(2+) site. His686 functions as the Proton donor in the catalytic mechanism. Position 718 (Cys718) interacts with Zn(2+).

It belongs to the vitamin-B12 independent methionine synthase family. Requires Zn(2+) as cofactor.

The catalysed reaction is 5-methyltetrahydropteroyltri-L-glutamate + L-homocysteine = tetrahydropteroyltri-L-glutamate + L-methionine. The protein operates within amino-acid biosynthesis; L-methionine biosynthesis via de novo pathway; L-methionine from L-homocysteine (MetE route): step 1/1. Catalyzes the transfer of a methyl group from 5-methyltetrahydrofolate to homocysteine resulting in methionine formation. This Corynebacterium efficiens (strain DSM 44549 / YS-314 / AJ 12310 / JCM 11189 / NBRC 100395) protein is 5-methyltetrahydropteroyltriglutamate--homocysteine methyltransferase.